The following is an 880-amino-acid chain: Leucine--tRNA ligase (880 aa).

Positions 49 to 59 (PYPSGRIHMGH) match the 'HIGH' region motif. A 'KMSKS' region motif is present at residues 638 to 642 (KMSKS). An ATP-binding site is contributed by Lys-641.

The protein belongs to the class-I aminoacyl-tRNA synthetase family.

The protein localises to the cytoplasm. The catalysed reaction is tRNA(Leu) + L-leucine + ATP = L-leucyl-tRNA(Leu) + AMP + diphosphate. The polypeptide is Leucine--tRNA ligase (Bartonella henselae (strain ATCC 49882 / DSM 28221 / CCUG 30454 / Houston 1) (Rochalimaea henselae)).